Consider the following 619-residue polypeptide: Chaperone protein HscA homolog (619 aa).

Belongs to the heat shock protein 70 family.

Functionally, chaperone involved in the maturation of iron-sulfur cluster-containing proteins. Has a low intrinsic ATPase activity which is markedly stimulated by HscB. This chain is Chaperone protein HscA homolog, found in Haemophilus influenzae (strain 86-028NP).